The following is a 67-amino-acid chain: DNA-directed RNA polymerase subunit omega (67 aa).

Belongs to the RNA polymerase subunit omega family. In terms of assembly, the RNAP catalytic core consists of 2 alpha, 1 beta, 1 beta' and 1 omega subunit. When a sigma factor is associated with the core the holoenzyme is formed, which can initiate transcription.

The catalysed reaction is RNA(n) + a ribonucleoside 5'-triphosphate = RNA(n+1) + diphosphate. In terms of biological role, promotes RNA polymerase assembly. Latches the N- and C-terminal regions of the beta' subunit thereby facilitating its interaction with the beta and alpha subunits. This chain is DNA-directed RNA polymerase subunit omega, found in Burkholderia multivorans (strain ATCC 17616 / 249).